The sequence spans 144 residues: uncharacterized protein (144 aa).

Residues 90 to 144 form a disordered region; sequence KKEYSALKKSGKIHKVGGSKSSGHRKTKKPKKSMKGGSKTKKLSEKQLMKELLAM. Basic residues predominate over residues 98–130; sequence KSGKIHKVGGSKSSGHRKTKKPKKSMKGGSKTK.

This is an uncharacterized protein from Sputnik virophage.